Reading from the N-terminus, the 135-residue chain is Small ribosomal subunit protein uS11 (135 aa).

The span at 1 to 10 shows a compositional bias: polar residues; the sequence is MPPKSRTATA. 2 disordered regions span residues 1–27 and 114–135; these read MPPK…HGHA and GAIQ…RRRV. Residues 12 to 27 show a composition bias toward basic residues; sequence RKPRRKEKKNVAHGHA.

The protein belongs to the universal ribosomal protein uS11 family. Part of the 30S ribosomal subunit. Interacts with proteins S7 and S18. Binds to IF-3.

Its function is as follows. Located on the platform of the 30S subunit, it bridges several disparate RNA helices of the 16S rRNA. Forms part of the Shine-Dalgarno cleft in the 70S ribosome. The polypeptide is Small ribosomal subunit protein uS11 (Kineococcus radiotolerans (strain ATCC BAA-149 / DSM 14245 / SRS30216)).